A 204-amino-acid chain; its full sequence is NAD(P)H dehydrogenase (quinone) (204 aa).

In terms of domain architecture, Flavodoxin-like spans 3-194 (VLIVFYSMYG…AGARYQGRHV (192 aa)). Residues 9 to 14 (SMYGHI) and 82 to 84 (TRF) each bind FMN. Residue Tyr11 participates in NAD(+) binding. Trp102 is a binding site for substrate. His138 is an FMN binding site.

It belongs to the WrbA family. FMN serves as cofactor.

The catalysed reaction is a quinone + NADH + H(+) = a quinol + NAD(+). It carries out the reaction a quinone + NADPH + H(+) = a quinol + NADP(+). The chain is NAD(P)H dehydrogenase (quinone) from Syntrophobacter fumaroxidans (strain DSM 10017 / MPOB).